Reading from the N-terminus, the 212-residue chain is Large ribosomal subunit protein uL3 (212 aa).

The tract at residues 134–154 (RKTHGNSVSHRVPGSIGQNQT) is disordered. Q153 carries the N5-methylglutamine modification.

This sequence belongs to the universal ribosomal protein uL3 family. As to quaternary structure, part of the 50S ribosomal subunit. Forms a cluster with proteins L14 and L19. In terms of processing, methylated by PrmB.

Its function is as follows. One of the primary rRNA binding proteins, it binds directly near the 3'-end of the 23S rRNA, where it nucleates assembly of the 50S subunit. In Dichelobacter nodosus (strain VCS1703A), this protein is Large ribosomal subunit protein uL3.